A 344-amino-acid chain; its full sequence is GPALPP motifs-containing protein 1 (344 aa).

Residues Met-1 to Lys-309 are disordered. At Ala-2 the chain carries N-acetylalanine. The GPALPP motif 1 motif lies at Gly-7–Pro-12. Ser-28 bears the Phosphoserine mark. Positions Gly-30–Pro-35 match the GPALPP motif 2 motif. Acidic residues-rich tracts occupy residues Gly-58–Thr-67 and Asp-80–Gly-93. The GPALPP motif 3 signature appears at Gly-96–Pro-101. Ser-109 carries the phosphoserine modification. The span at Pro-111–Pro-120 shows a compositional bias: pro residues. A GPALPP motif 4 motif is present at residues Gly-116–Pro-121. Positions Gln-128–Pro-137 are enriched in basic and acidic residues. The residue at position 142 (Thr-142) is a Phosphothreonine. Phosphoserine occurs at positions 144 and 145. Composition is skewed to basic and acidic residues over residues Glu-167 to Val-191, Pro-231 to Ala-265, Glu-273 to Ile-283, and Lys-291 to Lys-309. A Glycyl lysine isopeptide (Lys-Gly) (interchain with G-Cter in SUMO2) cross-link involves residue Lys-275. Lys-312 participates in a covalent cross-link: Glycyl lysine isopeptide (Lys-Gly) (interchain with G-Cter in SUMO2).

In Pongo abelii (Sumatran orangutan), this protein is GPALPP motifs-containing protein 1 (GPALPP1).